Reading from the N-terminus, the 377-residue chain is MTLQAIKYNNGDLAIIDQLQLPHVEKYVTIHNSEEGWHAIKDMRVRGAPAIAIVAALALASELHGLMAHDKLSPEAEDVQTFVVEKLRYLVSSRPTAVNLSDAARKLEVVVAQSARAPGATGKTVATAFIQAAEEMLVKDVEDNKKIGEHGAQWILKNSLEGHGKATVLTHCNTGSLATSGYGTALGVIRSLASADSLQHAYCTETRPYNQGSRLTAFELVHDALPATLITDSMAAALLASKKAGVNAIVVGADRVAANGDTANKIGTYGLAVLAKYHNVKFLVAAPLTTIDLNTKSGDQIVIEERLASEVTSIRGPRDNTGSEDVELVTVCTAAKGINVWNPAFDVTPAALIDGIITEKGVMEKDSAGMFHLEELF.

The Proton donor role is filled by D254.

The protein belongs to the eIF-2B alpha/beta/delta subunits family. MtnA subfamily.

It is found in the cytoplasm. Its subcellular location is the nucleus. It carries out the reaction 5-(methylsulfanyl)-alpha-D-ribose 1-phosphate = 5-(methylsulfanyl)-D-ribulose 1-phosphate. It participates in amino-acid biosynthesis; L-methionine biosynthesis via salvage pathway; L-methionine from S-methyl-5-thio-alpha-D-ribose 1-phosphate: step 1/6. Its function is as follows. Catalyzes the interconversion of methylthioribose-1-phosphate (MTR-1-P) into methylthioribulose-1-phosphate (MTRu-1-P). The sequence is that of Methylthioribose-1-phosphate isomerase (mri1) from Aspergillus terreus (strain NIH 2624 / FGSC A1156).